A 321-amino-acid chain; its full sequence is Cysteine and histidine-rich domain-containing protein 1 (321 aa).

Positions 9, 14, 28, 31, 46, 47, 63, 68, 152, 157, 170, 173, 188, 189, 205, and 210 each coordinate Zn(2+). CHORD domains lie at 9–68 (CYHK…RGKH) and 152–210 (CRNN…SGEH). A CS domain is found at 218-308 (VSKFREDWFS…KHGTGWPRLK (91 aa)).

Functionally, regulates centrosome duplication. Controls the secretion of the tyrosine kinase receptor let-23/EGFR from the endoplasmic reticulum and is required for the localization of let-23/EGFR to the plasma membrane of vulval precursor cells. It thus plays a role in positively regulating let/EGFR signaling, and anchor cell and vulval precursor cell alignment. Plays a role in vulval development and morphogenesis. The sequence is that of Cysteine and histidine-rich domain-containing protein 1 from Caenorhabditis elegans.